Consider the following 219-residue polypeptide: Counting factor-associated protein C (219 aa).

An N-terminal signal peptide occupies residues 1–16; the sequence is MKVLILLVSLISVCFS. Residues asparagine 74 and asparagine 123 are each glycosylated (N-linked (GlcNAc...) asparagine).

It is found in the secreted. The protein is Counting factor-associated protein C (cfaC) of Dictyostelium discoideum (Social amoeba).